A 901-amino-acid polypeptide reads, in one-letter code: Valine--tRNA ligase (901 aa).

A disordered region spans residues 1-37; it reads MLPGCYTHRLNMSDTQDPPQDESTTDESADALDGEYD. The span at 19 to 35 shows a compositional bias: acidic residues; that stretch reads PQDESTTDESADALDGE. Positions 72–82 match the 'HIGH' region motif; that stretch reads PTVSGNLHMGH. Positions 572–576 match the 'KMSKS' region motif; that stretch reads AMSKS. Lys575 is a binding site for ATP.

Belongs to the class-I aminoacyl-tRNA synthetase family. ValS type 2 subfamily.

It is found in the cytoplasm. The catalysed reaction is tRNA(Val) + L-valine + ATP = L-valyl-tRNA(Val) + AMP + diphosphate. In terms of biological role, catalyzes the attachment of valine to tRNA(Val). As ValRS can inadvertently accommodate and process structurally similar amino acids such as threonine, to avoid such errors, it has a 'posttransfer' editing activity that hydrolyzes mischarged Thr-tRNA(Val) in a tRNA-dependent manner. The sequence is that of Valine--tRNA ligase from Haloarcula marismortui (strain ATCC 43049 / DSM 3752 / JCM 8966 / VKM B-1809) (Halobacterium marismortui).